The sequence spans 925 residues: Probable dipeptidyl-aminopeptidase B (925 aa).

The segment at 1-104 (MTPYRDVPPV…RHAQKKGPGM (104 aa)) is disordered. At 1–110 (MTPYRDVPPV…GPGMDRGMRR (110 aa)) the chain is on the cytoplasmic side. The segment covering 31 to 40 (ESGSSVSTTS) has biased composition (low complexity). The segment covering 55 to 72 (LSEKQPRGDDNEDALKDE) has biased composition (basic and acidic residues). Residues 111–131 (ALLIAAGLLVSAWVAGLFVYI) traverse the membrane as a helical; Signal-anchor for type II membrane protein segment. Over 132–925 (ATKSYKPASA…PKPNGKRRAA (794 aa)) the chain is Vacuolar. Residue N369 is glycosylated (N-linked (GlcNAc...) asparagine). The active-site Charge relay system is the S773. N832 is a glycosylation site (N-linked (GlcNAc...) asparagine). Residues D850 and H883 each act as charge relay system in the active site.

This sequence belongs to the peptidase S9B family.

It is found in the vacuole membrane. The enzyme catalyses Release of an N-terminal dipeptide, Xaa-Yaa-|-Zaa-, from a polypeptide, preferentially when Yaa is Pro, provided Zaa is neither Pro nor hydroxyproline.. Its function is as follows. Type IV dipeptidyl-peptidase which removes N-terminal dipeptides sequentially from polypeptides having unsubstituted N-termini provided that the penultimate residue is proline. The chain is Probable dipeptidyl-aminopeptidase B (DAPB) from Chaetomium globosum (strain ATCC 6205 / CBS 148.51 / DSM 1962 / NBRC 6347 / NRRL 1970) (Soil fungus).